Reading from the N-terminus, the 712-residue chain is Rap1 GTPase-activating protein 2 (712 aa).

Residues 1–33 form a disordered region; it reads MLAGLKVKKQELANSSDVTLPDRPLSPPLTAPP. At Ser-26 the chain carries Phosphoserine. Thr-30 is subject to Phosphothreonine. A Rap-GAP domain is found at 229–445; it reads IVSYDEHDVN…RTRAALLDNL (217 aa). A phosphoserine mark is found at Ser-488, Ser-495, Ser-525, Ser-539, Ser-545, Ser-593, and Ser-594. Positions 529-712 are disordered; that stretch reads AAATAKNQSR…LSHASSSAGH (184 aa). Positions 566 to 594 are enriched in polar residues; the sequence is DSASSTPKTPDGGHSSQEIKSETSSNPSS. The span at 599-612 shows a compositional bias: basic and acidic residues; that stretch reads PNKEKPFIKLKENG. The segment covering 617–629 has biased composition (low complexity); it reads SRSSSSTSSFSST. The segment covering 641 to 652 has biased composition (polar residues); that stretch reads SGSSQPSTTSPF. Over residues 660 to 669 the composition is skewed to low complexity; sequence SPSPSSESPS. The span at 681 to 694 shows a compositional bias: polar residues; it reads RSPTDAKSRNSPRS.

The protein localises to the cytoplasm. Functionally, GTPase activator for the nuclear Ras-related regulatory protein RAP-1A (KREV-1), converting it to the putatively inactive GDP-bound state. The chain is Rap1 GTPase-activating protein 2 (Rap1gap2) from Mus musculus (Mouse).